The chain runs to 284 residues: Deoxyribonuclease-1 (284 aa).

The signal sequence occupies residues 1 to 22 (MRAARLMGALLALAGLLQLALS). An N-linked (GlcNAc...) asparagine glycan is attached at Asn40. Glu100 is an active-site residue. Residues Cys123 and Cys126 are joined by a disulfide bond. A glycan (N-linked (GlcNAc...) asparagine) is linked at Asn128. His156 is an active-site residue. Residues Cys195 and Cys231 are joined by a disulfide bond.

The protein belongs to the DNase I family. Ca(2+) is required as a cofactor. Mg(2+) serves as cofactor.

The protein localises to the secreted. Its subcellular location is the zymogen granule. It is found in the nucleus envelope. The catalysed reaction is Endonucleolytic cleavage to 5'-phosphodinucleotide and 5'-phosphooligonucleotide end-products.. Its function is as follows. Serum endocuclease secreted into body fluids by a wide variety of exocrine and endocrine organs. Expressed by non-hematopoietic tissues and preferentially cleaves protein-free DNA. Among other functions, seems to be involved in cell death by apoptosis. Binds specifically to G-actin and blocks actin polymerization. Together with DNASE1L3, plays a key role in degrading neutrophil extracellular traps (NETs). NETs are mainly composed of DNA fibers and are released by neutrophils to bind pathogens during inflammation. Degradation of intravascular NETs by DNASE1 and DNASE1L3 is required to prevent formation of clots that obstruct blood vessels and cause organ damage following inflammation. The polypeptide is Deoxyribonuclease-1 (DNASE1) (Sus scrofa (Pig)).